A 344-amino-acid polypeptide reads, in one-letter code: Methionine import ATP-binding protein MetN (344 aa).

One can recognise an ABC transporter domain in the interval 2 to 241 (IELKNIGKQF…PTTQLAQQFI (240 aa)). An ATP-binding site is contributed by 38 to 45 (GASGAGKS).

The protein belongs to the ABC transporter superfamily. Methionine importer (TC 3.A.1.24) family. The complex is composed of two ATP-binding proteins (MetN), two transmembrane proteins (MetI) and a solute-binding protein (MetQ).

Its subcellular location is the cell inner membrane. The catalysed reaction is L-methionine(out) + ATP + H2O = L-methionine(in) + ADP + phosphate + H(+). It catalyses the reaction D-methionine(out) + ATP + H2O = D-methionine(in) + ADP + phosphate + H(+). Part of the ABC transporter complex MetNIQ involved in methionine import. Responsible for energy coupling to the transport system. The chain is Methionine import ATP-binding protein MetN from Haemophilus ducreyi (strain 35000HP / ATCC 700724).